We begin with the raw amino-acid sequence, 196 residues long: HTH-type transcriptional regulator UidR (196 aa).

An HTH tetR-type domain is found at 10 to 70 (QPTRTRILNA…AIILQDQERA (61 aa)). The H-T-H motif DNA-binding region spans 33-52 (SMKAICKSCAISPGTLYHHF).

Repressor for the uidRABC (gusRABC) operon. The protein is HTH-type transcriptional regulator UidR (uidR) of Escherichia coli O157:H7.